Here is a 913-residue protein sequence, read N- to C-terminus: Protein translocase subunit SecA (913 aa).

ATP-binding positions include glutamine 87, 105-109, and aspartate 512; that span reads GEGKT. 4 residues coordinate Zn(2+): cysteine 897, cysteine 899, cysteine 908, and histidine 909.

The protein belongs to the SecA family. Monomer and homodimer. Part of the essential Sec protein translocation apparatus which comprises SecA, SecYEG and auxiliary proteins SecDF-YajC and YidC. The cofactor is Zn(2+).

The protein localises to the cell inner membrane. Its subcellular location is the cytoplasm. The enzyme catalyses ATP + H2O + cellular proteinSide 1 = ADP + phosphate + cellular proteinSide 2.. Part of the Sec protein translocase complex. Interacts with the SecYEG preprotein conducting channel. Has a central role in coupling the hydrolysis of ATP to the transfer of proteins into and across the cell membrane, serving both as a receptor for the preprotein-SecB complex and as an ATP-driven molecular motor driving the stepwise translocation of polypeptide chains across the membrane. The sequence is that of Protein translocase subunit SecA from Pseudomonas savastanoi pv. phaseolicola (strain 1448A / Race 6) (Pseudomonas syringae pv. phaseolicola (strain 1448A / Race 6)).